The primary structure comprises 85 residues: Beta-insect depressant toxin Lqh-dprIT3a (85 aa).

A signal peptide spans 1–21 (MKLLLLLTISASMLIEGLVNA). The LCN-type CS-alpha/beta domain occupies 22–82 (DGYIRGGDGC…EWDYETNTCG (61 aa)). 4 cysteine pairs are disulfide-bonded: cysteine 31-cysteine 81, cysteine 35-cysteine 56, cysteine 42-cysteine 63, and cysteine 46-cysteine 65. Glycine 82 carries the post-translational modification Glycine amide.

It belongs to the long (4 C-C) scorpion toxin superfamily. Sodium channel inhibitor family. Beta subfamily. In terms of tissue distribution, expressed by the venom gland.

The protein localises to the secreted. Depressant insect beta-toxins cause a transient contraction paralysis followed by a slow flaccid paralysis. They bind voltage-independently at site-4 of sodium channels (Nav) and block action potentials, primarily by depolarizing the axonal membrane and suppressing the sodium current. This depressant toxin is active only on insects. It is found in a relatively small amount in the venom, and its activity on insects is 10-fold higher compared to other known depressant toxins. The polypeptide is Beta-insect depressant toxin Lqh-dprIT3a (Leiurus hebraeus (Hebrew deathstalker scorpion)).